A 722-amino-acid chain; its full sequence is Probable acyl-activating enzyme 16, chloroplastic (722 aa).

The transit peptide at 1–47 directs the protein to the chloroplast; that stretch reads MASTSLGASILVSHCSSAPEFQVSGMRLVFGYKAFGCRTSRRGFRVR.

The protein belongs to the ATP-dependent AMP-binding enzyme family.

Its subcellular location is the plastid. The protein localises to the chloroplast. May be involved in the activation of fatty acids to acyl-carrier-protein. The polypeptide is Probable acyl-activating enzyme 16, chloroplastic (AAE16) (Arabidopsis thaliana (Mouse-ear cress)).